Here is a 266-residue protein sequence, read N- to C-terminus: Undecaprenyl-diphosphatase 1 (266 aa).

Helical transmembrane passes span 1 to 21, 39 to 59, 87 to 107, 114 to 134, 149 to 169, 183 to 203, 218 to 238, and 246 to 266; these read MDTF…FLPI, QGLS…VIYF, WWII…KDFI, TGVI…ADKM, ALLI…RSGA, AAAR…AILV, ALTL…HYFL, and MTPF…FIFL.

The protein belongs to the UppP family.

Its subcellular location is the cell inner membrane. The enzyme catalyses di-trans,octa-cis-undecaprenyl diphosphate + H2O = di-trans,octa-cis-undecaprenyl phosphate + phosphate + H(+). In terms of biological role, catalyzes the dephosphorylation of undecaprenyl diphosphate (UPP). Confers resistance to bacitracin. This chain is Undecaprenyl-diphosphatase 1, found in Shewanella oneidensis (strain ATCC 700550 / JCM 31522 / CIP 106686 / LMG 19005 / NCIMB 14063 / MR-1).